A 442-amino-acid chain; its full sequence is Elongation factor 1-alpha (442 aa).

The 224-residue stretch at 6–229 (KPHMNLIVIG…ALDNLKPPSV (224 aa)) folds into the tr-type G domain. Residues 15–22 (GHVDHGKS) form a G1 region. 15-22 (GHVDHGKS) contributes to the GTP binding site. Serine 22 lines the Mg(2+) pocket. Positions 71-75 (GVTID) are G2. A G3 region spans residues 92 to 95 (DAPG). Residues 92–96 (DAPGH) and 154–157 (NKMD) each bind GTP. The tract at residues 154–157 (NKMD) is G4. A G5 region spans residues 195 to 197 (SAW).

Belongs to the TRAFAC class translation factor GTPase superfamily. Classic translation factor GTPase family. EF-Tu/EF-1A subfamily.

It is found in the cytoplasm. The enzyme catalyses GTP + H2O = GDP + phosphate + H(+). Its function is as follows. GTP hydrolase that promotes the GTP-dependent binding of aminoacyl-tRNA to the A-site of ribosomes during protein biosynthesis. This chain is Elongation factor 1-alpha, found in Ignicoccus hospitalis (strain KIN4/I / DSM 18386 / JCM 14125).